A 208-amino-acid chain; its full sequence is Large ribosomal subunit protein uL3 (208 aa).

Position 149 is an N5-methylglutamine (Gln-149).

It belongs to the universal ribosomal protein uL3 family. In terms of assembly, part of the 50S ribosomal subunit. Forms a cluster with proteins L14 and L19. In terms of processing, methylated by PrmB.

Its function is as follows. One of the primary rRNA binding proteins, it binds directly near the 3'-end of the 23S rRNA, where it nucleates assembly of the 50S subunit. In Haemophilus influenzae (strain PittGG), this protein is Large ribosomal subunit protein uL3.